The sequence spans 201 residues: Small ribosomal subunit protein uS4 (201 aa).

A disordered region spans residues 1-42 (MARYTGPVTRKSRRLGTDLVGGDQSFEKRPYPPGQHGRARIK). One can recognise an S4 RNA-binding domain in the interval 91–157 (SRLDNVVYRA…VPFQIARETA (67 aa)).

Belongs to the universal ribosomal protein uS4 family. Part of the 30S ribosomal subunit. Contacts protein S5. The interaction surface between S4 and S5 is involved in control of translational fidelity.

One of the primary rRNA binding proteins, it binds directly to 16S rRNA where it nucleates assembly of the body of the 30S subunit. Its function is as follows. With S5 and S12 plays an important role in translational accuracy. In Mycobacterium marinum (strain ATCC BAA-535 / M), this protein is Small ribosomal subunit protein uS4.